Here is an 80-residue protein sequence, read N- to C-terminus: MKTGIKQVKLHVRKNDTVLVIAGNDKGKTGKVLRVFPQKNRVIVEGVNIRKRHVRPTQSHPQGAIIEREFPIHASNVKKS.

The protein belongs to the universal ribosomal protein uL24 family. Part of the 50S ribosomal subunit.

In terms of biological role, one of two assembly initiator proteins, it binds directly to the 5'-end of the 23S rRNA, where it nucleates assembly of the 50S subunit. Functionally, one of the proteins that surrounds the polypeptide exit tunnel on the outside of the subunit. This chain is Large ribosomal subunit protein uL24, found in Chlorobium phaeobacteroides (strain BS1).